A 604-amino-acid chain; its full sequence is Polycomb group protein EMF2B (604 aa).

The C2H2-type zinc finger occupies 310-331; that stretch reads CPFCLVPCGSFKGLGCHLNASH. The interval 396–440 is disordered; that stretch reads PHIVDSGSPEDAQAGSEDDYVQRENGSSVAHASVDPANSLHGSNL. The VEFS-box stretch occupies residues 454-589; that stretch reads LSVERADPRN…DARAMNACNT (136 aa).

It belongs to the VEFS (VRN2-EMF2-FIS2-SU(Z)12) family. Component of the polycomb repressive complex 2 (PRC2), composed of the core PRC2 components FIE2, EZ1 and CLF. PRC2 methylates 'Lys-27' residues of histone H3 (H3K27me3), leading to transcriptional repression of the affected target gene. Widely expressed.

In terms of biological role, polycomb group (PcG) protein. PcG proteins act by forming multiprotein complexes, which are required to maintain the transcriptionally repressive state of homeotic genes throughout development. PcG proteins are not required to initiate repression, but to maintain it during later stages of development. They act via the methylation of histones, rendering chromatin heritably changed in its expressibility. Polycomb group (PcG) protein involved in the repression of flowering under long day (LD) conditions. Regulates floret development. This chain is Polycomb group protein EMF2B, found in Oryza sativa subsp. japonica (Rice).